Consider the following 70-residue polypeptide: ATP synthase subunit c (70 aa).

The next 2 helical transmembrane spans lie at 1–21 and 47–67; these read MNFLAAAIAAGLAAFAASYGN and FIGVGLIEAVPILSIVVSFLI.

This sequence belongs to the ATPase C chain family. In terms of assembly, F-type ATPases have 2 components, F(1) - the catalytic core - and F(0) - the membrane proton channel. F(1) has five subunits: alpha(3), beta(3), gamma(1), delta(1), epsilon(1). F(0) has three main subunits: a(1), b(2) and c(10-14). The alpha and beta chains form an alternating ring which encloses part of the gamma chain. F(1) is attached to F(0) by a central stalk formed by the gamma and epsilon chains, while a peripheral stalk is formed by the delta and b chains.

Its subcellular location is the cell membrane. F(1)F(0) ATP synthase produces ATP from ADP in the presence of a proton or sodium gradient. F-type ATPases consist of two structural domains, F(1) containing the extramembraneous catalytic core and F(0) containing the membrane proton channel, linked together by a central stalk and a peripheral stalk. During catalysis, ATP synthesis in the catalytic domain of F(1) is coupled via a rotary mechanism of the central stalk subunits to proton translocation. Its function is as follows. Key component of the F(0) channel; it plays a direct role in translocation across the membrane. A homomeric c-ring of between 10-14 subunits forms the central stalk rotor element with the F(1) delta and epsilon subunits. The sequence is that of ATP synthase subunit c from Latilactobacillus sakei subsp. sakei (strain 23K) (Lactobacillus sakei subsp. sakei).